Reading from the N-terminus, the 65-residue chain is MAKSKDTRITIILECNICSNNKKSNFPKSSRYTTQKNRRNTPNRLILKKFCSNCQQHTIYNEIKK.

This sequence belongs to the bacterial ribosomal protein bL33 family.

It localises to the plastid. It is found in the chloroplast. The polypeptide is Large ribosomal subunit protein bL33c (Chara vulgaris (Common stonewort)).